A 209-amino-acid chain; its full sequence is 3-demethoxyubiquinol 3-hydroxylase (209 aa).

The span at 23–36 (PHATRAAPAPAQAP) shows a compositional bias: low complexity. Positions 23–42 (PHATRAAPAPAQAPGEMTDS) are disordered. Fe cation contacts are provided by E58, E88, H91, E140, E172, and H175.

Belongs to the COQ7 family. It depends on Fe cation as a cofactor.

The protein resides in the cell membrane. The enzyme catalyses a 5-methoxy-2-methyl-3-(all-trans-polyprenyl)benzene-1,4-diol + AH2 + O2 = a 3-demethylubiquinol + A + H2O. It functions in the pathway cofactor biosynthesis; ubiquinone biosynthesis. Its function is as follows. Catalyzes the hydroxylation of 2-nonaprenyl-3-methyl-6-methoxy-1,4-benzoquinol during ubiquinone biosynthesis. This is 3-demethoxyubiquinol 3-hydroxylase from Variovorax paradoxus (strain S110).